We begin with the raw amino-acid sequence, 90 residues long: Probable Fe(2+)-trafficking protein (90 aa).

The protein belongs to the Fe(2+)-trafficking protein family.

Could be a mediator in iron transactions between iron acquisition and iron-requiring processes, such as synthesis and/or repair of Fe-S clusters in biosynthetic enzymes. This is Probable Fe(2+)-trafficking protein from Idiomarina loihiensis (strain ATCC BAA-735 / DSM 15497 / L2-TR).